The following is a 289-amino-acid chain: Nodulation protein NolT (289 aa).

Residues 1–33 form the signal peptide; sequence MFGSAHGDTTSSDTSGRRPLRLVVLPLLLALSS. Cysteine 34 carries the N-palmitoyl cysteine lipid modification. Cysteine 34 carries the S-diacylglycerol cysteine lipid modification. Residues 233–253 traverse the membrane as a helical segment; the sequence is VAVGVSAAVFAVTCYLLFIVL.

It belongs to the YscJ lipoprotein family.

It is found in the cell outer membrane. This is Nodulation protein NolT (nolT) from Sinorhizobium fredii (strain NBRC 101917 / NGR234).